A 256-amino-acid chain; its full sequence is Thiazole synthase (256 aa).

The active-site Schiff-base intermediate with DXP is Lys-95. Residues Gly-156, Ala-182–Gly-183, and Asn-204–Thr-205 contribute to the 1-deoxy-D-xylulose 5-phosphate site.

It belongs to the ThiG family. Homotetramer. Forms heterodimers with either ThiH or ThiS.

It localises to the cytoplasm. The enzyme catalyses [ThiS sulfur-carrier protein]-C-terminal-Gly-aminoethanethioate + 2-iminoacetate + 1-deoxy-D-xylulose 5-phosphate = [ThiS sulfur-carrier protein]-C-terminal Gly-Gly + 2-[(2R,5Z)-2-carboxy-4-methylthiazol-5(2H)-ylidene]ethyl phosphate + 2 H2O + H(+). It participates in cofactor biosynthesis; thiamine diphosphate biosynthesis. Its function is as follows. Catalyzes the rearrangement of 1-deoxy-D-xylulose 5-phosphate (DXP) to produce the thiazole phosphate moiety of thiamine. Sulfur is provided by the thiocarboxylate moiety of the carrier protein ThiS. In vitro, sulfur can be provided by H(2)S. This is Thiazole synthase from Escherichia coli O8 (strain IAI1).